The following is a 394-amino-acid chain: MPRYCAAICCKNRRGRNNKERKLSFYPFPLHDKERLEKWLKNMKRDSWVPSKYQFLCSDHFTPDSLDIRWGIRYLKQTAIPTIFALPEDNQEKDPSKKKSQKKKLKSEKEVCLKAKSEESFASNEPKKHPVNTDLLPEHAELLESSALVKPPDPKAESVQNNILTLSLVKQGTRKPESILETSVNQDMGIGGFHTSFENLSSTTITLTTASSEGIQQPLETQEVIEITTNHLANPHFTNNSVEIKSAQENPFILSTVTQTVEELNTDKESVIAIFVPTENSKPAINSFIPAPKTVEMEEDIDIEDSYKDVDYETEVLQIEHSYCRQDVNKEHLWQKVSKLHSKITLLELQEQQTLGRLKSLEALIRQLKQENWLSEENVKIIENHFTTYEVTMI.

A THAP-type zinc finger spans residues 1–84 (MPRYCAAICC…LKQTAIPTIF (84 aa)). A disordered region spans residues 86–109 (LPEDNQEKDPSKKKSQKKKLKSEK). Residues 320-323 (EHSY) carry the HCFC1-binding motif (HBM) motif. Positions 347 to 381 (LELQEQQTLGRLKSLEALIRQLKQENWLSEENVKI) form a coiled coil.

Interacts with HTRA2; under apoptotic conditions. Interacts with ABRAXAS2. Post-translationally, cleaved by HTRA2 during apoptosis.

Its subcellular location is the nucleus. Functionally, has sequence-specific DNA-binding activity and can function as transcriptional repressor (in vitro). May be a regulator of cell cycle: THAP5 overexpression in human cell lines causes cell cycle arrest at G2/M phase. The polypeptide is THAP domain-containing protein 5 (THAP5) (Bos taurus (Bovine)).